The following is a 423-amino-acid chain: Histidine--tRNA ligase (423 aa).

It belongs to the class-II aminoacyl-tRNA synthetase family. Homodimer.

Its subcellular location is the cytoplasm. It catalyses the reaction tRNA(His) + L-histidine + ATP = L-histidyl-tRNA(His) + AMP + diphosphate + H(+). This is Histidine--tRNA ligase from Anoxybacillus flavithermus (strain DSM 21510 / WK1).